The chain runs to 155 residues: Protein-export protein SecB (155 aa).

It belongs to the SecB family. As to quaternary structure, homotetramer, a dimer of dimers. One homotetramer interacts with 1 SecA dimer.

It localises to the cytoplasm. In terms of biological role, one of the proteins required for the normal export of preproteins out of the cell cytoplasm. It is a molecular chaperone that binds to a subset of precursor proteins, maintaining them in a translocation-competent state. It also specifically binds to its receptor SecA. This is Protein-export protein SecB from Citrobacter koseri (strain ATCC BAA-895 / CDC 4225-83 / SGSC4696).